The chain runs to 583 residues: GTP diphosphokinase CRSH1, chloroplastic (583 aa).

The span at 1–13 (MATAATTSAAAIP) shows a compositional bias: low complexity. Residues 1–68 (MATAATTSAA…SSSSSTPAEG (68 aa)) form a disordered region. The N-terminal 69 residues, 1 to 69 (MATAATTSAA…SSSSTPAEGG (69 aa)), are a transit peptide targeting the chloroplast. Over residues 19 to 39 (RRQHPHPRRPGLRPRRLHRLR) the composition is skewed to basic residues. Low complexity predominate over residues 40-66 (LPAQAAAAAAASSPSTSSSSSSSSTPA). Residues 119 to 219 (ALARALAIAA…LELALKLDMM (101 aa)) enclose the HD domain. EF-hand domains lie at 473 to 508 (GDSN…LGAG) and 510 to 542 (KDAK…IELM). Aspartate 486, asparagine 488, aspartate 490, arginine 492, glutamate 497, aspartate 520, asparagine 522, aspartate 524, serine 526, and glutamate 531 together coordinate Ca(2+).

This sequence belongs to the RelA/SpoT family. As to expression, expressed in roots and shoots.

The protein resides in the plastid. It localises to the chloroplast. It carries out the reaction GTP + ATP = guanosine 3'-diphosphate 5'-triphosphate + AMP. With respect to regulation, activated by calcium. Functionally, possesses calcium-dependent ppGpp (guanosine 3'-diphosphate 5'-diphosphate) synthetase activity in vitro and is able to functionally complement E.coli relA mutants. May be involved in a rapid plant ppGpp-mediated response to pathogens and other stresses. The polypeptide is GTP diphosphokinase CRSH1, chloroplastic (Oryza sativa subsp. japonica (Rice)).